Consider the following 304-residue polypeptide: MDKTSVYHHIPVLLKESVDGLNVCSGGIYVDVTFGGGGHSKEILVRLGNTGHLYGFDQDEDSEKNIFSDIRFTFVRSNFRYLAHFMDWHNVKEIDGLLADLGVSSIHFDDCNRGFSFRFIGNLDMRMNQRKGETAADILNTYSENKLIDMFDLYGELKNSASIAHAIVQARMQREIQTVQDFLDILKPFVRKGKVEKQLAQIFQALRIEVNKELDALKEMLIQAKQLLRSGGRIAIITYHSLEDRLVKFFFKTGSFYEKIERDFYGNFLSPFKIINHRVIVASDEEVKRNPRSRSAKLRIAEKI.

Residues 37–39 (GGH), aspartate 57, phenylalanine 85, aspartate 100, and histidine 107 contribute to the S-adenosyl-L-methionine site.

The protein belongs to the methyltransferase superfamily. RsmH family.

The protein localises to the cytoplasm. The enzyme catalyses cytidine(1402) in 16S rRNA + S-adenosyl-L-methionine = N(4)-methylcytidine(1402) in 16S rRNA + S-adenosyl-L-homocysteine + H(+). Functionally, specifically methylates the N4 position of cytidine in position 1402 (C1402) of 16S rRNA. The sequence is that of Ribosomal RNA small subunit methyltransferase H from Azobacteroides pseudotrichonymphae genomovar. CFP2.